Consider the following 225-residue polypeptide: Protein-disulfide oxidoreductase DsbI (225 aa).

Residues 27-47 (FLWLLMAIAMGGLIILAHSFF) form a helical membrane-spanning segment. A disulfide bridge connects residues Cys-56 and Cys-59. 2 helical membrane-spanning segments follow: residues 65 to 85 (AMFVMVIGGVIAAINPKNIVL) and 87 to 107 (LIGCIAAFYGSIMGIKFSIKL). A disulfide bridge connects residues Cys-128 and Cys-154. Residues 199 to 219 (CMLAFGLCLILLLVMSGAWAL) form a helical membrane-spanning segment.

This sequence belongs to the DsbB family. DsbI subfamily. In terms of assembly, interacts with DsbL.

The protein localises to the cell inner membrane. Functionally, required for disulfide bond formation in some proteins. Part of a redox system composed of DsbI and DsbL that mediates formation of an essential disulfide bond in AssT. This Salmonella choleraesuis (strain SC-B67) protein is Protein-disulfide oxidoreductase DsbI.